Consider the following 511-residue polypeptide: Glycoprotein (511 aa).

The N-terminal stretch at 1–16 (MKCLLYLAFLFIGVNC) is a signal peptide. At 17–467 (KFTIVFPHNQ…FSSWKSSIAS (451 aa)) the chain is on the virion surface side. The tract at residues 18-35 (FTIVFPHNQKGNWKNVPS) is trimerization. 6 disulfides stabilise this stretch: Cys-40–Cys-300, Cys-75–Cys-108, Cys-84–Cys-130, Cys-169–Cys-174, Cys-193–Cys-240, and Cys-235–Cys-269. Residues 53–172 (IGTALQVKMP…QFINGKCSND (120 aa)) are fusion peptide. Asn-179 carries N-linked (GlcNAc...) asparagine; by host glycosylation. Residues 259 to 309 (DLFAAARFPECPEGSSISAPSQTSVDVSLIQDVERILDYSLCQETWSKIRA) are trimerization. The N-linked (GlcNAc...) asparagine; by host glycan is linked to Asn-336. Positions 383 to 405 (EIGPNGVLRTSLGYKFPLYMIGH) are trimerization. The chain crosses the membrane as a helical span at residues 468 to 488 (FFFIIGLIIGLFLVLRVGIYL). A lipid anchor (S-palmitoyl cysteine; by host) is attached at Cys-489. Over 489–511 (CIKLKHTKKRQIYTDIEMNRLGK) the chain is Intravirion. Positions 496–506 (KKRQIYTDIEM) match the basolateral targeting ex vivo motif.

The protein belongs to the vesiculovirus glycoprotein family. Homotrimer. Interacts with host LDL at target cell surface. In terms of processing, glycosylated by host. Palmitoylated by host.

It is found in the virion membrane. The protein localises to the host membrane. Attaches the virus to host LDL receptors, inducing clathrin-dependent endocytosis of the virion. In the endosome, the acidic pH induces conformational changes in the glycoprotein trimer, which trigger fusion between virus and endosomal membrane. This chain is Glycoprotein (G), found in Vesicular stomatitis Indiana virus (strain Orsay) (VSIV).